The following is a 475-amino-acid chain: Ribulose bisphosphate carboxylase large chain (475 aa).

The propeptide occupies 1-2 (MS). An N-acetylproline modification is found at P3. The residue at position 14 (K14) is an N6,N6,N6-trimethyllysine. Substrate contacts are provided by N123 and T173. K175 acts as the Proton acceptor in catalysis. K177 contributes to the substrate binding site. Mg(2+)-binding residues include K201, D203, and E204. Residue K201 is modified to N6-carboxylysine. H294 acts as the Proton acceptor in catalysis. Substrate is bound by residues R295, H327, and S379.

Belongs to the RuBisCO large chain family. Type I subfamily. In terms of assembly, heterohexadecamer of 8 large chains and 8 small chains; disulfide-linked. The disulfide link is formed within the large subunit homodimers. The cofactor is Mg(2+). The disulfide bond which can form in the large chain dimeric partners within the hexadecamer appears to be associated with oxidative stress and protein turnover.

The protein resides in the plastid. Its subcellular location is the chloroplast. It catalyses the reaction 2 (2R)-3-phosphoglycerate + 2 H(+) = D-ribulose 1,5-bisphosphate + CO2 + H2O. It carries out the reaction D-ribulose 1,5-bisphosphate + O2 = 2-phosphoglycolate + (2R)-3-phosphoglycerate + 2 H(+). In terms of biological role, ruBisCO catalyzes two reactions: the carboxylation of D-ribulose 1,5-bisphosphate, the primary event in carbon dioxide fixation, as well as the oxidative fragmentation of the pentose substrate in the photorespiration process. Both reactions occur simultaneously and in competition at the same active site. This Lotus japonicus (Lotus corniculatus var. japonicus) protein is Ribulose bisphosphate carboxylase large chain.